The sequence spans 79 residues: Conotoxin 12 (79 aa).

The signal sequence occupies residues 1–22; it reads MKLTCVLIITVLFLTASQLITA. A propeptide spanning residues 23-47 is cleaved from the precursor; it reads DYSRDQRQYRAVRLGDEMRNFKGAR. 3 cysteine pairs are disulfide-bonded: Cys49-Cys62, Cys56-Cys67, and Cys61-Cys77.

It belongs to the conotoxin O1 superfamily. Expressed by the venom duct.

It is found in the secreted. This is Conotoxin 12 from Conus vexillum (Flag cone).